Reading from the N-terminus, the 189-residue chain is Holliday junction branch migration complex subunit RuvA (189 aa).

The segment at 1–63 (MIHALNGKVE…DDGISLYGFL (63 aa)) is domain I. The domain II stretch occupies residues 64–135 (EVIKLKLFEK…ELKDTIKELD (72 aa)). A flexible linker region spans residues 135-139 (DVSIN). Residues 140–189 (EKDRKVLEAIEALVTLGFNRNQAKKAVNKVAAKDDKLDDIIKKALRFLSR) are domain III.

This sequence belongs to the RuvA family. As to quaternary structure, homotetramer. Forms an RuvA(8)-RuvB(12)-Holliday junction (HJ) complex. HJ DNA is sandwiched between 2 RuvA tetramers; dsDNA enters through RuvA and exits via RuvB. An RuvB hexamer assembles on each DNA strand where it exits the tetramer. Each RuvB hexamer is contacted by two RuvA subunits (via domain III) on 2 adjacent RuvB subunits; this complex drives branch migration. In the full resolvosome a probable DNA-RuvA(4)-RuvB(12)-RuvC(2) complex forms which resolves the HJ.

The protein resides in the cytoplasm. The RuvA-RuvB-RuvC complex processes Holliday junction (HJ) DNA during genetic recombination and DNA repair, while the RuvA-RuvB complex plays an important role in the rescue of blocked DNA replication forks via replication fork reversal (RFR). RuvA specifically binds to HJ cruciform DNA, conferring on it an open structure. The RuvB hexamer acts as an ATP-dependent pump, pulling dsDNA into and through the RuvAB complex. HJ branch migration allows RuvC to scan DNA until it finds its consensus sequence, where it cleaves and resolves the cruciform DNA. The protein is Holliday junction branch migration complex subunit RuvA of Thermosipho africanus (strain TCF52B).